A 221-amino-acid polypeptide reads, in one-letter code: MTAQIIIAVPKGRILKEVLPLFAALGIVPEPAFGDEDSRLLRFATNRSDIGLIRVRAFDVATFVAHGAAQLGIVGSDVLMEFDYSELYAPVDLAIGHCRISVAEPVAMAAGDDPREWSHVRVATKYPNITRRHFEARGVQAECVKLNGAMEIAPVLGLSSRIVDLVSTGRTLKDNGLAEVETIAEVSSRLIVNRAAFKTRAGEIGPLVEGFRRAVEDKNAA.

This sequence belongs to the ATP phosphoribosyltransferase family. Short subfamily. As to quaternary structure, heteromultimer composed of HisG and HisZ subunits.

It localises to the cytoplasm. The enzyme catalyses 1-(5-phospho-beta-D-ribosyl)-ATP + diphosphate = 5-phospho-alpha-D-ribose 1-diphosphate + ATP. It participates in amino-acid biosynthesis; L-histidine biosynthesis; L-histidine from 5-phospho-alpha-D-ribose 1-diphosphate: step 1/9. Functionally, catalyzes the condensation of ATP and 5-phosphoribose 1-diphosphate to form N'-(5'-phosphoribosyl)-ATP (PR-ATP). Has a crucial role in the pathway because the rate of histidine biosynthesis seems to be controlled primarily by regulation of HisG enzymatic activity. The protein is ATP phosphoribosyltransferase of Rhizorhabdus wittichii (strain DSM 6014 / CCUG 31198 / JCM 15750 / NBRC 105917 / EY 4224 / RW1) (Sphingomonas wittichii).